A 20-amino-acid polypeptide reads, in one-letter code: Pregnancy-associated glycoprotein 75 (20 aa).

It belongs to the peptidase A1 family. In terms of processing, N-glycosylated. In terms of tissue distribution, expressed in chorionic epithelium (trophectoderm).

It is found in the secreted. This chain is Pregnancy-associated glycoprotein 75, found in Bubalus bubalis (Domestic water buffalo).